The chain runs to 547 residues: Sodium-coupled neutral amino acid transporter 4 (547 aa).

Positions 1 to 30 are disordered; sequence MDPMELRNVNIEPDDESSSGESAPDSYIGI. The Extracellular segment spans residues 1-104; sequence MDPMELRNVN…GLSYAMANTG (104 aa). S49 carries the post-translational modification Phosphoserine. The helical transmembrane segment at 105-125 threads the bilayer; sequence IILFIIMLLAVAILSLYSVHL. At 126-151 the chain is on the cytoplasmic side; it reads LLKTAKEGGSLIYEKLGEKAFGWPGK. A helical transmembrane segment spans residues 152 to 172; it reads IGAFVSITMQNIGAMSSYLFI. The Extracellular segment spans residues 173-195; the sequence is IKYELPEVIRAFMGLEENTGEWY. A helical transmembrane segment spans residues 196–216; sequence LNGNYLIIFVSVGIILPLSLL. Residues 217-220 lie on the Cytoplasmic side of the membrane; the sequence is KNLG. The helical transmembrane segment at 221–241 threads the bilayer; it reads YLGYTSGFSLTCMVFFVSVVI. At 242 to 332 the chain is on the extracellular side; it reads YKKFQIPCPL…PKYFVFNSRT (91 aa). An intrachain disulfide couples C249 to C321. N-linked (GlcNAc...) asparagine glycosylation is found at N260, N264, and N276. A helical membrane pass occupies residues 333 to 353; it reads AYAIPILVFAFVCHPEVLPIY. At 354–369 the chain is on the cytoplasmic side; that stretch reads SELKDRSRRKMQTVSN. The chain crosses the membrane as a helical span at residues 370–390; it reads ISITGMLVMYLLAALFGYLTF. Residues 391-411 lie on the Extracellular side of the membrane; sequence YGEVEDELLHAYSKVYTLDIP. A helical membrane pass occupies residues 412-432; the sequence is LLMVRLAVLVAVTLTVPIVLF. Residues 433-453 are Cytoplasmic-facing; sequence PIRTSVITLLFPKRPFSWIRH. A helical membrane pass occupies residues 454-474; sequence FLIAAVLIALNNVLVILVPTI. The Extracellular portion of the chain corresponds to 475–476; the sequence is KY. Residues 477–497 traverse the membrane as a helical segment; it reads IFGFIGASSATMLIFILPAVF. Residues 498–514 are Cytoplasmic-facing; sequence YLKLVKKETFRSPQKVG. A helical membrane pass occupies residues 515–535; the sequence is ALIFLVVGIFFMIGSMALIII. Residues 536 to 547 are Extracellular-facing; it reads DWIYDPPNSKHH.

It belongs to the amino acid/polyamine transporter 2 family. In terms of processing, the disulfide bond plays an important role in substrate transport, but has no effect on trafficking to the cell surface. As to expression, expressed almost exclusively in embryonic and adult liver, and at lower levels in the kidney. Expressed at lower levels in adult muscle and pancreas. Detected in fetal blood vessels. Expressed in syncytiotrophoblas of placenta during first trimester and at term. Highly expressed in first trimester placenta compared to term placenta.

It localises to the cell membrane. The protein localises to the cell projection. Its subcellular location is the microvillus membrane. The enzyme catalyses L-methionine(in) + Na(+)(in) = L-methionine(out) + Na(+)(out). It catalyses the reaction L-asparagine(in) + Na(+)(in) = L-asparagine(out) + Na(+)(out). It carries out the reaction L-threonine(in) + Na(+)(in) = L-threonine(out) + Na(+)(out). The catalysed reaction is L-serine(in) + Na(+)(in) = L-serine(out) + Na(+)(out). The enzyme catalyses glycine(in) + Na(+)(in) = glycine(out) + Na(+)(out). It catalyses the reaction L-alanine(in) + Na(+)(in) = L-alanine(out) + Na(+)(out). It carries out the reaction L-glutamine(in) + Na(+)(in) = L-glutamine(out) + Na(+)(out). The catalysed reaction is L-histidine(in) + Na(+)(in) = L-histidine(out) + Na(+)(out). The enzyme catalyses L-cysteine(in) + Na(+)(in) = L-cysteine(out) + Na(+)(out). It catalyses the reaction L-proline(in) + Na(+)(in) = L-proline(out) + Na(+)(out). In terms of biological role, symporter that cotransports neutral amino acids and sodium ions from the extraccellular to the intracellular side of the cell membrane. The transport is electrogenic, pH dependent and partially tolerates substitution of Na(+) by Li(+). Preferentially transports smaller amino acids, such as glycine, L-alanine, L-serine, L-asparagine and L-threonine, followed by L-cysteine, L-histidine, L-proline and L-glutamine and L-methionine. This is Sodium-coupled neutral amino acid transporter 4 from Homo sapiens (Human).